We begin with the raw amino-acid sequence, 339 residues long: Peroxidase 29 (339 aa).

Positions 1–28 (MKPKSKVAESTAASCFLVMSLLCSCIIG) are cleaved as a signal peptide. 4 disulfides stabilise this stretch: Cys47–Cys127, Cys80–Cys85, Cys133–Cys335, and Cys213–Cys242. Catalysis depends on His78, which acts as the Proton acceptor. The Ca(2+) site is built by Asp79, Val82, Gly84, Asp86, and Ser88. Pro176 provides a ligand contact to substrate. His206 contributes to the heme b binding site. Thr207 serves as a coordination point for Ca(2+). Residue Asn224 is glycosylated (N-linked (GlcNAc...) asparagine). Ca(2+) is bound by residues Asp260, Thr262, and Asp267.

This sequence belongs to the peroxidase family. Classical plant (class III) peroxidase subfamily. Heme b serves as cofactor. The cofactor is Ca(2+).

The protein localises to the secreted. It carries out the reaction 2 a phenolic donor + H2O2 = 2 a phenolic radical donor + 2 H2O. Its function is as follows. Removal of H(2)O(2), oxidation of toxic reductants, biosynthesis and degradation of lignin, suberization, auxin catabolism, response to environmental stresses such as wounding, pathogen attack and oxidative stress. These functions might be dependent on each isozyme/isoform in each plant tissue. This is Peroxidase 29 (PER29) from Arabidopsis thaliana (Mouse-ear cress).